Consider the following 973-residue polypeptide: MEEHIPLPSQYESPKALPPRVPSSRWLRSLRPRLANSCLALKIRAHESLVKIRLCKPYDAQSRSKIIEKVIERRETRKTLAHQLKDLKLVPVARDHTHGRAAKFRTSANIWMNEAMRAAGYEPYNVSMSNHDIERGNRYFYFAKDLTIPYRNDPVSDNTGFVFCDVDYYADMEKWMQHFKPMLLYTLVPESLSYHCDDHSFHVNDDRVFFDVRGGASYSHQLWDYTGDTICVRGKNKELLVFTIEQKCIQGDPHRRIIFLEPAARVAWPFYKPMKVEVGLKRKCMTAGQVNVLYEPIDDKISLSASGSRHTVETTGRTLAAITARMKNKTSPPMVADVERILRDAGDKEACVNAPILFELIPEAKFRVNVVKTTATPTHFQPLGPLRTEDGETCGHAVTTTLATAPALLPMRGVNSDVATVNGRVKKPANTVIPFKEYKEYASEFVEFLVPEPGVGHPWDTAAVREVQDNRQQKARINMVAATVSTHSSNRLKAFIKAEAYAATNDPRNITTMAPELTLMMSCFTYAFKEKILYEQPWYGPGKTPKQVGRRLQSIAKHGTLESDYSRFDGSISEWLQKNVVKAAYMRFFKEHQRTEFQSWFSKVFMQMGTTTAGVRYEAGWGTRSGSPITTDGNTMLNAFVVYCCYRKLCHTPAEAWRKLSQGALLTGDDAVLAHENGLEPALLDVVKNLGLKVEAKVNGPDDPVSFCGRIYPRLSDCITSFQDPLRTIPKLHLTTNKGVSPEQAAANRAHGYLATDKATPIIGTWARRVIELTGDLKVKGATREEQYKLSNAHQQLDPSLIETAMANILGIDVGELKALDKAVSEAKALDQMPVVLGNCYKHKIEAVVGGEVVGPGPRVETVEPNHEQSSGTPEVVPEMAGHSERRDKSSNPRPGGKAEGLSSKAGKPRVPTRPAADRKAAAGSGNRRGPTNGRRPIRDRAPRGGGRPNPGTTPPVSNSETTTTTAVVHASA.

The segment at histidine 96–alanine 264 is capping. The 126-residue stretch at histidine 558–leucine 683 folds into the RdRp catalytic domain. Catalysis depends on aspartate 669, which acts as the For RdRp/TNTase activity. The disordered stretch occupies residues valine 853–alanine 973. Residues glycine 882–serine 891 show a composition bias toward basic and acidic residues. Low complexity-rich tracts occupy residues glycine 924–arginine 935 and proline 955–alanine 973.

This sequence belongs to the nodaviridae RNA polymerase family. As to quaternary structure, homododecamer. Forms 2 stacked rings of 35-nm in diameter, arranged in a crown-like structure at the opening of virus-induced replication vesicles. Interacts with protein B2. Mn(2+) serves as cofactor.

It localises to the host mitochondrion outer membrane. It carries out the reaction RNA(n) + a ribonucleoside 5'-triphosphate = RNA(n+1) + diphosphate. Its function is as follows. RNA-dependent RNA polymerase, which replicates the viral genome composed of 2 RNA segments, RNA1 and RNA2. Does not need an exogenous primer. Also possesses a terminal nucleotidyl transferase (TNTase) activity. The TNTase catalyzes the addition of nucleotide to the 3'-end of plus- and minus-stranded RNAs, probably to repair the 3'-end nucleotide loss. Forms the open necked connection to the cytosol of the virus-induced replication vesicles. Mediates viral RNA1 recruitment. The chain is RNA-directed RNA polymerase from Spodoptera eridania (Southern armyworm).